The sequence spans 328 residues: uncharacterized protein (328 aa).

Residues 37-179 (LTERLLCHQG…AMTVLRCRKI (143 aa)) enclose the SIS domain. 52 to 57 (GIGKSG) contributes to the ATP binding site. CBS domains lie at 205–264 (LSPR…GGAI) and 273–328 (MTRK…AGLL).

It belongs to the SIS family. GutQ/KpsF subfamily.

This is an uncharacterized protein from Chlamydia muridarum (strain MoPn / Nigg).